The chain runs to 812 residues: Xaa-Pro dipeptidyl-peptidase (812 aa).

Active-site charge relay system residues include Ser-372, Asp-492, and His-523.

Belongs to the peptidase S15 family. Homodimer.

The protein localises to the cytoplasm. The catalysed reaction is Hydrolyzes Xaa-Pro-|- bonds to release unblocked, N-terminal dipeptides from substrates including Ala-Pro-|-p-nitroanilide and (sequentially) Tyr-Pro-|-Phe-Pro-|-Gly-Pro-|-Ile.. Removes N-terminal dipeptides sequentially from polypeptides having unsubstituted N-termini provided that the penultimate residue is proline. This is Xaa-Pro dipeptidyl-peptidase from Pediococcus pentosaceus (strain ATCC 25745 / CCUG 21536 / LMG 10740 / 183-1w).